Here is a 316-residue protein sequence, read N- to C-terminus: Ribosomal RNA small subunit methyltransferase H (316 aa).

Residues 35-37 (AGH), Asp-55, Phe-84, Asp-105, and Gln-112 contribute to the S-adenosyl-L-methionine site.

This sequence belongs to the methyltransferase superfamily. RsmH family.

The protein resides in the cytoplasm. The enzyme catalyses cytidine(1402) in 16S rRNA + S-adenosyl-L-methionine = N(4)-methylcytidine(1402) in 16S rRNA + S-adenosyl-L-homocysteine + H(+). Functionally, specifically methylates the N4 position of cytidine in position 1402 (C1402) of 16S rRNA. This is Ribosomal RNA small subunit methyltransferase H from Streptococcus pneumoniae (strain ATCC 700669 / Spain 23F-1).